Here is a 246-residue protein sequence, read N- to C-terminus: Pyruvate formate-lyase 1-activating enzyme (246 aa).

Residues 16-239 form the Radical SAM core domain; it reads VDGPGIRFIT…MERVKGILEQ (224 aa). Residues Cys30, Cys34, and Cys37 each coordinate [4Fe-4S] cluster. Residues 36–38, Gly79, 130–132, and His203 each bind S-adenosyl-L-methionine; these read YCH and DLK.

This sequence belongs to the organic radical-activating enzymes family. [4Fe-4S] cluster is required as a cofactor.

The protein resides in the cytoplasm. It carries out the reaction glycyl-[formate C-acetyltransferase] + reduced [flavodoxin] + S-adenosyl-L-methionine = glycin-2-yl radical-[formate C-acetyltransferase] + semiquinone [flavodoxin] + 5'-deoxyadenosine + L-methionine + H(+). Its function is as follows. Activation of pyruvate formate-lyase 1 under anaerobic conditions by generation of an organic free radical, using S-adenosylmethionine and reduced flavodoxin as cosubstrates to produce 5'-deoxy-adenosine. The protein is Pyruvate formate-lyase 1-activating enzyme (pflA) of Escherichia coli O157:H7.